Here is a 363-residue protein sequence, read N- to C-terminus: tRNA/tmRNA (uracil-C(5))-methyltransferase (363 aa).

5 residues coordinate S-adenosyl-L-methionine: Gln-187, Tyr-215, Asn-220, Glu-236, and Asp-296. Residue Cys-321 is the Nucleophile of the active site. The active-site Proton acceptor is Glu-355.

This sequence belongs to the class I-like SAM-binding methyltransferase superfamily. RNA M5U methyltransferase family. TrmA subfamily.

The catalysed reaction is uridine(54) in tRNA + S-adenosyl-L-methionine = 5-methyluridine(54) in tRNA + S-adenosyl-L-homocysteine + H(+). It catalyses the reaction uridine(341) in tmRNA + S-adenosyl-L-methionine = 5-methyluridine(341) in tmRNA + S-adenosyl-L-homocysteine + H(+). Its function is as follows. Dual-specificity methyltransferase that catalyzes the formation of 5-methyluridine at position 54 (m5U54) in all tRNAs, and that of position 341 (m5U341) in tmRNA (transfer-mRNA). The sequence is that of tRNA/tmRNA (uracil-C(5))-methyltransferase from Pseudomonas fluorescens.